We begin with the raw amino-acid sequence, 71 residues long: High-potential iron-sulfur protein isozyme 2 (71 aa).

The [4Fe-4S] cluster site is built by Cys34, Cys37, Cys51, and Cys65.

It belongs to the high-potential iron-sulfur protein (HiPIP) family. As to quaternary structure, homodimer.

Specific class of high-redox-potential 4Fe-4S ferredoxins. Functions in anaerobic electron transport in most purple and in some other photosynthetic bacteria and in at least one genus (Paracoccus) of halophilic, denitrifying bacteria. The chain is High-potential iron-sulfur protein isozyme 2 (hip2) from Ectothiorhodospira shaposhnikovii (Ectothiorhodospira vacuolata).